A 359-amino-acid polypeptide reads, in one-letter code: MNNARTNAKRRRLSSKQGGLSISEGKESNIPSVVEESKDNLEQASADDRLNFGDRILVKAPGYPWWPALLLRRKETKDSLNTNSSFNVLYKVLFFPDFNFAWVKRNSVKPLLDSEIAKFLGSSKRKSKELIEAYEASKTPPDLKEESSTDEEMDSLSAAEEKPNFLQKRKYHWETSLDESDAESISSGSLMSITSISEMYGPTVASTSRSSTQLSDQRYPLSSNFDHRGEAKGKGKQPLKNPQERGRISPSSPLNDQTKALMQRLLFFRHKLQKAFLSPDHLIVEEDFYNASKYLNAISDIPFLNYELITSTKLAKVLKRIAFLEHLENDELYDIRQKCKNLLYSWAMFLPNEPSIKGM.

The disordered stretch occupies residues 1–37; that stretch reads MNNARTNAKRRRLSSKQGGLSISEGKESNIPSVVEES. The region spanning 52–114 is the PWWP domain; sequence FGDRILVKAP…RNSVKPLLDS (63 aa). Disordered regions lie at residues 133–161 and 204–255; these read AYEA…AAEE and VAST…SPLN. A compositionally biased stretch (polar residues) spans 204–224; sequence VASTSRSSTQLSDQRYPLSSN. Position 252 is a phosphoserine (Ser252).

Interacts with set9 and histone H4K20me1. Associates with nucleosomes.

Its subcellular location is the nucleus. Necessary for DNA damage checkpoint activation. Required for the association of set9 with chromatin and subsequent methylation of H4K20. Associates with H4K20me1 to increase the concentration of set9 on chromatin to perform H4K20me3. H4K20me3 is mainly enriched at heterochromatin and is required for proper heterochromatin assembly. The polypeptide is PWWP domain-containing protein 1 (pdp1) (Schizosaccharomyces pombe (strain 972 / ATCC 24843) (Fission yeast)).